The sequence spans 446 residues: Chromosomal replication initiator protein DnaA (446 aa).

The domain I, interacts with DnaA modulators stretch occupies residues 1 to 92 (MENISDLWNS…SQAEEEIDLP (92 aa)). The tract at residues 93 to 109 (PSKPNAAQDDSNHLPQS) is domain II. The domain III, AAA+ region stretch occupies residues 110–326 (MLNPKYTFDT…GALIRVVAYS (217 aa)). ATP contacts are provided by glycine 154, glycine 156, lysine 157, and threonine 158. The domain IV, binds dsDNA stretch occupies residues 327–446 (SLINKDINAD…QVEEINDILK (120 aa)).

The protein belongs to the DnaA family. Oligomerizes as a right-handed, spiral filament on DNA at oriC.

It is found in the cytoplasm. Plays an essential role in the initiation and regulation of chromosomal replication. ATP-DnaA binds to the origin of replication (oriC) to initiate formation of the DNA replication initiation complex once per cell cycle. Binds the DnaA box (a 9 base pair repeat at the origin) and separates the double-stranded (ds)DNA. Forms a right-handed helical filament on oriC DNA; dsDNA binds to the exterior of the filament while single-stranded (ss)DNA is stabiized in the filament's interior. The ATP-DnaA-oriC complex binds and stabilizes one strand of the AT-rich DNA unwinding element (DUE), permitting loading of DNA polymerase. After initiation quickly degrades to an ADP-DnaA complex that is not apt for DNA replication. Binds acidic phospholipids. This is Chromosomal replication initiator protein DnaA from Bacillus cereus (strain 03BB102).